The following is a 68-amino-acid chain: UPF0435 protein SA1696 (68 aa).

It belongs to the UPF0435 family.

The chain is UPF0435 protein SA1696 from Staphylococcus aureus (strain N315).